Consider the following 1274-residue polypeptide: ABC multidrug transporter E (1274 aa).

N48 carries N-linked (GlcNAc...) asparagine glycosylation. Positions 120–344 (FCFRVTGLRV…IASPLIIVSK (225 aa)) constitute an ABC transmembrane type-1 1 domain. The next 4 helical transmembrane spans lie at 183–203 (LALL…LTLV), 205–225 (SSAL…MTKI), 280–300 (IFGI…SLAF), and 321–341 (VFFS…PLII). Positions 377–629 (IIFRDVRFTY…EGGVYRDLVN (253 aa)) constitute an ABC transporter 1 domain. 412–419 (GPSGSGKS) is a binding site for ATP. 2 N-linked (GlcNAc...) asparagine glycosylation sites follow: N473 and N580. Helical transmembrane passes span 697–717 (VAVL…SWLF) and 737–757 (FWAL…STVG). The region spanning 697–984 (VAVLISTAGA…FFSFASNFAQ (288 aa)) is the ABC transmembrane type-1 2 domain. N-linked (GlcNAc...) asparagine glycosylation is present at N792. 3 consecutive transmembrane segments (helical) span residues 818-838 (FPLI…SFGW), 840-860 (LSLV…FMRI), and 924-944 (LIFA…FWYG). The region spanning 1023–1269 (VEFHDVSFRY…KGTYWQMVSS (247 aa)) is the ABC transporter 2 domain. Residue N1044 is glycosylated (N-linked (GlcNAc...) asparagine). An ATP-binding site is contributed by 1057–1064 (GPSGCGKT). N1117 carries N-linked (GlcNAc...) asparagine glycosylation.

The protein belongs to the ABC transporter superfamily. ABCB family. Multidrug resistance exporter (TC 3.A.1.201) subfamily.

The protein localises to the cell membrane. Its function is as follows. Pleiotropic ABC efflux transporter that may be involved in A.fumigatus adaptation to azoles such as vorizonazole. In Aspergillus fumigatus (strain ATCC MYA-4609 / CBS 101355 / FGSC A1100 / Af293) (Neosartorya fumigata), this protein is ABC multidrug transporter E.